We begin with the raw amino-acid sequence, 505 residues long: uncharacterized protein (505 aa).

The signal sequence occupies residues 1-22 (MAILKSALVGFICFLHFFIVNA). N-linked (GlcNAc...) asparagine glycans are attached at residues asparagine 25 and asparagine 114. The next 5 helical transmembrane spans lie at 181-201 (LFLNPILLAINCLIGIWWSFI), 216-236 (ISGVVALSIVCTMVSTGYFYF), 266-286 (FLLLIVSLGYSIVVPSLGSLL), 291-311 (ILAGLQFVSSCFFLSSLFISP), and 318-338 (VILFAAPVFLITLFAMFLWIV). Asparagine 342 is a glycosylation site (N-linked (GlcNAc...) asparagine). The next 2 membrane-spanning stretches (helical) occupy residues 365–385 (IVICFGIVAYASIVAANAILI) and 400–420 (LLWFLNYGYTDILVLILMLTI). A glycan (N-linked (GlcNAc...) asparagine) is linked at asparagine 454.

This sequence belongs to the LU7TM family.

It is found in the membrane. This is an uncharacterized protein from Schizosaccharomyces pombe (strain 972 / ATCC 24843) (Fission yeast).